A 405-amino-acid chain; its full sequence is Argininosuccinate synthase (405 aa).

ATP is bound at residue 9–17 (AYSGGLDTS). Tyrosine 87 and serine 92 together coordinate L-citrulline. Residue glycine 117 participates in ATP binding. L-aspartate contacts are provided by threonine 119, asparagine 123, and aspartate 124. Residue asparagine 123 participates in L-citrulline binding. 5 residues coordinate L-citrulline: arginine 127, serine 176, serine 185, glutamate 262, and tyrosine 274.

The protein belongs to the argininosuccinate synthase family. Type 1 subfamily. Homotetramer.

It localises to the cytoplasm. The catalysed reaction is L-citrulline + L-aspartate + ATP = 2-(N(omega)-L-arginino)succinate + AMP + diphosphate + H(+). The protein operates within amino-acid biosynthesis; L-arginine biosynthesis; L-arginine from L-ornithine and carbamoyl phosphate: step 2/3. The chain is Argininosuccinate synthase from Caldicellulosiruptor saccharolyticus (strain ATCC 43494 / DSM 8903 / Tp8T 6331).